A 446-amino-acid chain; its full sequence is CBL-interacting serine/threonine-protein kinase 24 (446 aa).

The 254-residue stretch at 11–264 folds into the Protein kinase domain; sequence YEVGRTIGEG…IQGIKKDPWF (254 aa). ATP is bound by residues 17 to 25 and Lys-40; that span reads IGEGTFAKV. Asp-134 (proton acceptor) is an active-site residue. An activation loop region spans residues 152–179; it reads DFGLSALPQEGVELLRTTCGTPNYVAPE. Position 156 is a phosphoserine (Ser-156). Residue Thr-168 is modified to Phosphothreonine. The NAF domain occupies 305–329; that stretch reads EGPLMMNAFEMITLSQGLNLSALFD. Positions 336 to 365 are PPI; the sequence is KRQTRFVSRREPSEIIANIEAVANSMGFKS.

The protein belongs to the protein kinase superfamily. CAMK Ser/Thr protein kinase family. SNF1 subfamily. Interacts with CBL1, CBL2, CBL4/SOS3, CBL5, CBL9, CBL10 and with the protein phosphatase 2C ABI2. It depends on Mn(2+) as a cofactor. In terms of processing, autophosphorylated.

It is found in the cytoplasm. It localises to the nucleus. The enzyme catalyses L-seryl-[protein] + ATP = O-phospho-L-seryl-[protein] + ADP + H(+). The catalysed reaction is L-threonyl-[protein] + ATP = O-phospho-L-threonyl-[protein] + ADP + H(+). In terms of biological role, involved in the regulatory pathway for the control of intracellular Na(+) and K(+) homeostasis and salt tolerance. Activates the vacuolar H(+)/Ca(2+) antiporter CAX1 and operates in synergy with CBL4/SOS3 to activate the plasma membrane Na(+)/H(+) antiporter SOS1. CIPK serine-threonine protein kinases interact with CBL proteins. Binding of a CBL protein to the regulatory NAF domain of CIPK protein lead to the activation of the kinase in a calcium-dependent manner. Phosphorylates CBL1, CBL4 and CBL10. This Arabidopsis thaliana (Mouse-ear cress) protein is CBL-interacting serine/threonine-protein kinase 24 (CIPK24).